Reading from the N-terminus, the 333-residue chain is Flap endonuclease 1 (333 aa).

An N-domain region spans residues 1-99 (MGVALREVLT…ETIESRREVR (99 aa)). Residues Asp-28, Asp-81, Glu-153, Glu-155, Asp-174, Asp-176, and Asp-235 each contribute to the Mg(2+) site. Residues 117–256 (EAYKQARASS…TALKIVKKDG (140 aa)) are I-domain. Residues 325–333 (GQKTLDRWF) form an interaction with PCNA region.

The protein belongs to the XPG/RAD2 endonuclease family. FEN1 subfamily. In terms of assembly, interacts with PCNA. PCNA stimulates the nuclease activity without altering cleavage specificity. Requires Mg(2+) as cofactor.

Functionally, structure-specific nuclease with 5'-flap endonuclease and 5'-3' exonuclease activities involved in DNA replication and repair. During DNA replication, cleaves the 5'-overhanging flap structure that is generated by displacement synthesis when DNA polymerase encounters the 5'-end of a downstream Okazaki fragment. Binds the unpaired 3'-DNA end and kinks the DNA to facilitate 5' cleavage specificity. Cleaves one nucleotide into the double-stranded DNA from the junction in flap DNA, leaving a nick for ligation. Also involved in the base excision repair (BER) pathway. Acts as a genome stabilization factor that prevents flaps from equilibrating into structures that lead to duplications and deletions. Also possesses 5'-3' exonuclease activity on nicked or gapped double-stranded DNA. In Methanosphaerula palustris (strain ATCC BAA-1556 / DSM 19958 / E1-9c), this protein is Flap endonuclease 1.